Reading from the N-terminus, the 142-residue chain is Nucleoside diphosphate kinase (142 aa).

Residues K11, F59, R87, T93, R104, and N114 each coordinate ATP. Residue H117 is the Pros-phosphohistidine intermediate of the active site.

This sequence belongs to the NDK family. As to quaternary structure, homotetramer. The cofactor is Mg(2+).

It is found in the cytoplasm. It carries out the reaction a 2'-deoxyribonucleoside 5'-diphosphate + ATP = a 2'-deoxyribonucleoside 5'-triphosphate + ADP. It catalyses the reaction a ribonucleoside 5'-diphosphate + ATP = a ribonucleoside 5'-triphosphate + ADP. Its function is as follows. Major role in the synthesis of nucleoside triphosphates other than ATP. The ATP gamma phosphate is transferred to the NDP beta phosphate via a ping-pong mechanism, using a phosphorylated active-site intermediate. This chain is Nucleoside diphosphate kinase, found in Marinobacter nauticus (strain ATCC 700491 / DSM 11845 / VT8) (Marinobacter aquaeolei).